The primary structure comprises 586 residues: Capsid scaffolding protein (586 aa).

Catalysis depends on charge relay system residues His-53, Ser-123, and His-142. Over residues 251–263 (SEETPENAIKDRS) the composition is skewed to basic and acidic residues. Disordered regions lie at residues 251–288 (SEET…HVPA), 330–364 (ARRD…DIWP), 458–486 (NKRD…YFPG), and 530–586 (SASN…MMAD). The span at 264 to 284 (VSTQTAPSFDISESQQPSGQT) shows a compositional bias: polar residues. Residues 312–331 (EDMVYVPFEKYASLLAASAR) are interaction with pAP. 2 interaction with major capsid protein regions span residues 566–586 (DAQT…MMAD) and 567–586 (AQTK…MMAD).

The protein belongs to the herpesviridae capsid scaffolding protein family. Homomultimer. Interacts with major capsid protein. In terms of assembly, exists in a monomer-dimer equilibrium with the dimer being the active species. Post-translationally, capsid scaffolding protein is cleaved by assemblin after formation of the spherical procapsid. As a result, the capsid obtains its mature, icosahedral shape. Cleavages occur at two or more sites: release (R-site) and maturation (M-site).

The protein resides in the host cytoplasm. Its subcellular location is the host nucleus. It carries out the reaction Cleaves -Ala-|-Ser- and -Ala-|-Ala- bonds in the scaffold protein.. In terms of biological role, acts as a scaffold protein by binding major capsid protein in the cytoplasm, inducing the nuclear localization of both proteins. Multimerizes in the nucleus such as major capsid protein forms the icosahedral T=16 capsid. Autocatalytic cleavage releases the assembly protein, and subsequently abolishes interaction with major capsid protein. Cleavages products are evicted from the capsid before or during DNA packaging. Its function is as follows. Protease that plays an essential role in virion assembly within the nucleus. Catalyzes the cleavage of the assembly protein after formation of the spherical procapsid. By that cleavage, the capsid matures and gains its icosahedral shape. The cleavage sites seem to include -Ala-Ser-, -Ala-Ala-, as well as Ala-Thr bonds. Assemblin and cleavages products are evicted from the capsid before or during DNA packaging. Functionally, plays a major role in capsid assembly. Acts as a scaffold protein by binding major capsid protein. Multimerizes in the nucleus such as major capsid protein forms the icosahedral T=16 capsid. Cleaved by assemblin after capsid completion. The cleavages products are evicted from the capsid before or during DNA packaging. This is Capsid scaffolding protein from Gallus gallus (Chicken).